The chain runs to 513 residues: Sterol 14-alpha demethylase rstn2 (513 aa).

Residues 3–23 (WPLIGAYALLAFVAIIALNVT) traverse the membrane as a helical segment. C453 is a heme binding site.

It belongs to the cytochrome P450 family. The cofactor is heme.

It localises to the membrane. The catalysed reaction is a 14alpha-methyl steroid + 3 reduced [NADPH--hemoprotein reductase] + 3 O2 = a Delta(14) steroid + formate + 3 oxidized [NADPH--hemoprotein reductase] + 4 H2O + 4 H(+). It catalyses the reaction a 14alpha-methyl steroid + reduced [NADPH--hemoprotein reductase] + O2 = a 14alpha-hydroxymethyl steroid + oxidized [NADPH--hemoprotein reductase] + H2O + H(+). It carries out the reaction a 14alpha-hydroxymethyl steroid + reduced [NADPH--hemoprotein reductase] + O2 = a 14alpha-formyl steroid + oxidized [NADPH--hemoprotein reductase] + 2 H2O + H(+). The enzyme catalyses a 14alpha-formyl steroid + reduced [NADPH--hemoprotein reductase] + O2 = a Delta(14) steroid + formate + oxidized [NADPH--hemoprotein reductase] + H2O + 2 H(+). The catalysed reaction is lanosterol + 3 reduced [NADPH--hemoprotein reductase] + 3 O2 = 4,4-dimethyl-5alpha-cholesta-8,14,24-trien-3beta-ol + formate + 3 oxidized [NADPH--hemoprotein reductase] + 4 H2O + 4 H(+). It catalyses the reaction lanosterol + reduced [NADPH--hemoprotein reductase] + O2 = 32-hydroxylanosterol + oxidized [NADPH--hemoprotein reductase] + H2O + H(+). It carries out the reaction 32-hydroxylanosterol + reduced [NADPH--hemoprotein reductase] + O2 = 32-oxolanosterol + oxidized [NADPH--hemoprotein reductase] + 2 H2O + H(+). The enzyme catalyses 32-oxolanosterol + reduced [NADPH--hemoprotein reductase] + O2 = 4,4-dimethyl-5alpha-cholesta-8,14,24-trien-3beta-ol + formate + oxidized [NADPH--hemoprotein reductase] + H2O + 2 H(+). The catalysed reaction is eburicol + 3 reduced [NADPH--hemoprotein reductase] + 3 O2 = 14-demethyleburicol + formate + 3 oxidized [NADPH--hemoprotein reductase] + 4 H2O + 4 H(+). It catalyses the reaction eburicol + reduced [NADPH--hemoprotein reductase] + O2 = 32-hydroxyeburicol + oxidized [NADPH--hemoprotein reductase] + H2O + H(+). It carries out the reaction 32-hydroxyeburicol + reduced [NADPH--hemoprotein reductase] + O2 = 32-oxoeburicol + oxidized [NADPH--hemoprotein reductase] + 2 H2O + H(+). The enzyme catalyses 32-oxoeburicol + reduced [NADPH--hemoprotein reductase] + O2 = 14-demethyleburicol + formate + oxidized [NADPH--hemoprotein reductase] + H2O + 2 H(+). It functions in the pathway steroid biosynthesis; sterol biosynthesis. Functionally, sterol 14-alpha demethylase; part of the gene cluster that mediates the biosynthesis of the tetrahydropyranyl antifungal agent restricticin that acts as an inhibitor of CYP51 and blocks the ergosterol biosynthesis. Sterol 14-alpha-demethylase plays a critical role in the biosynthesis of ergosterol, the major sterol component in fungal membranes that participates in a variety of functions. Rtsn2 acts as a self-resistant CYP51 that contains mutations found in CYP51s isolated from azole resistance strains and that is not inhibited by the final product of the cluster, restricticin. This is Sterol 14-alpha demethylase rstn2 from Aspergillus nomiae NRRL (strain ATCC 15546 / NRRL 13137 / CBS 260.88 / M93).